Here is a 95-residue protein sequence, read N- to C-terminus: uncharacterized protein (95 aa).

This is an uncharacterized protein from Archaeoglobus fulgidus (strain ATCC 49558 / DSM 4304 / JCM 9628 / NBRC 100126 / VC-16).